Reading from the N-terminus, the 472-residue chain is Estrogen receptor beta (472 aa).

Residues 1–104 (MAFCSPAMMN…NPGSKRDAHF (104 aa)) are modulating. NR C4-type zinc fingers lie at residues 105-125 (CAVCSDYASGYHYGVWSCEGC) and 141-165 (CPATNQCTIDKNRRKSCQACRLRKC). Residues 105-170 (CAVCSDYASG…RLRKCYEVGM (66 aa)) constitute a DNA-binding region (nuclear receptor). Residues 217 to 449 (SPEQFVLTLL…DLLLEMLNAH (233 aa)) enclose the NR LBD domain.

This sequence belongs to the nuclear hormone receptor family. NR3 subfamily. In terms of assembly, binds DNA as a homodimer. Can form a heterodimer with ER-alpha. In terms of tissue distribution, a high expression is seen in the telencephalon, diencephalon, pituitary, testis and kidneys but little or no expression is seen in the cerebellum, pectoral muscle and adrenal gland.

Its subcellular location is the nucleus. In terms of biological role, binds estrogens with an affinity similar to that of ER-alpha, and activates expression of reporter genes containing estrogen response elements (ERE) in an estrogen-dependent manner. This is Estrogen receptor beta (ESR2) from Coturnix japonica (Japanese quail).